Here is a 401-residue protein sequence, read N- to C-terminus: 4-hydroxy-3-methylbut-2-enyl diphosphate reductase (401 aa).

Position 66 (Cys66) interacts with [4Fe-4S] cluster. His96 lines the (2E)-4-hydroxy-3-methylbut-2-enyl diphosphate pocket. His96 is a binding site for dimethylallyl diphosphate. Isopentenyl diphosphate is bound at residue His96. Cys157 lines the [4Fe-4S] cluster pocket. His185 is a (2E)-4-hydroxy-3-methylbut-2-enyl diphosphate binding site. Position 185 (His185) interacts with dimethylallyl diphosphate. His185 serves as a coordination point for isopentenyl diphosphate. Glu187 (proton donor) is an active-site residue. Thr250 serves as a coordination point for (2E)-4-hydroxy-3-methylbut-2-enyl diphosphate. Cys288 provides a ligand contact to [4Fe-4S] cluster. Positions 317, 318, 319, and 379 each coordinate (2E)-4-hydroxy-3-methylbut-2-enyl diphosphate. Dimethylallyl diphosphate is bound by residues Ser317, Ser318, Asn319, and Ser379. 4 residues coordinate isopentenyl diphosphate: Ser317, Ser318, Asn319, and Ser379.

The protein belongs to the IspH family. It depends on [4Fe-4S] cluster as a cofactor.

The catalysed reaction is isopentenyl diphosphate + 2 oxidized [2Fe-2S]-[ferredoxin] + H2O = (2E)-4-hydroxy-3-methylbut-2-enyl diphosphate + 2 reduced [2Fe-2S]-[ferredoxin] + 2 H(+). It catalyses the reaction dimethylallyl diphosphate + 2 oxidized [2Fe-2S]-[ferredoxin] + H2O = (2E)-4-hydroxy-3-methylbut-2-enyl diphosphate + 2 reduced [2Fe-2S]-[ferredoxin] + 2 H(+). It participates in isoprenoid biosynthesis; dimethylallyl diphosphate biosynthesis; dimethylallyl diphosphate from (2E)-4-hydroxy-3-methylbutenyl diphosphate: step 1/1. It functions in the pathway isoprenoid biosynthesis; isopentenyl diphosphate biosynthesis via DXP pathway; isopentenyl diphosphate from 1-deoxy-D-xylulose 5-phosphate: step 6/6. Its function is as follows. Catalyzes the conversion of 1-hydroxy-2-methyl-2-(E)-butenyl 4-diphosphate (HMBPP) into a mixture of isopentenyl diphosphate (IPP) and dimethylallyl diphosphate (DMAPP). Acts in the terminal step of the DOXP/MEP pathway for isoprenoid precursor biosynthesis. In Trichodesmium erythraeum (strain IMS101), this protein is 4-hydroxy-3-methylbut-2-enyl diphosphate reductase.